A 217-amino-acid chain; its full sequence is Peroxiredoxin (217 aa).

In terms of domain architecture, Thioredoxin spans 2-159 (VVIGEKFPEV…VVRLVKALQT (158 aa)). Cys46 functions as the Cysteine sulfenic acid (-SOH) intermediate in the catalytic mechanism. Residue Arg122 coordinates substrate.

It belongs to the peroxiredoxin family. Prx6 subfamily. Homodecamer. Pentamer of dimers that assemble into a ring structure.

Its subcellular location is the cytoplasm. The catalysed reaction is a hydroperoxide + [thioredoxin]-dithiol = an alcohol + [thioredoxin]-disulfide + H2O. Functionally, thiol-specific peroxidase that catalyzes the reduction of hydrogen peroxide and organic hydroperoxides to water and alcohols, respectively. Plays a role in cell protection against oxidative stress by detoxifying peroxides. The sequence is that of Peroxiredoxin from Methanococcus maripaludis (strain C5 / ATCC BAA-1333).